The sequence spans 64 residues: Large ribosomal subunit protein bL28 (64 aa).

The segment at 1-27 (MAKRDQLTGKGPLSGNTRSHAMNHSKR) is disordered.

Belongs to the bacterial ribosomal protein bL28 family.

The protein is Large ribosomal subunit protein bL28 of Ureaplasma parvum serovar 3 (strain ATCC 27815 / 27 / NCTC 11736).